The primary structure comprises 288 residues: 4-diphosphocytidyl-2-C-methyl-D-erythritol kinase (288 aa).

The active site involves K8. 90 to 100 (PVGAGLAGGSS) is a binding site for ATP. D132 is a catalytic residue.

It belongs to the GHMP kinase family. IspE subfamily.

The enzyme catalyses 4-CDP-2-C-methyl-D-erythritol + ATP = 4-CDP-2-C-methyl-D-erythritol 2-phosphate + ADP + H(+). The protein operates within isoprenoid biosynthesis; isopentenyl diphosphate biosynthesis via DXP pathway; isopentenyl diphosphate from 1-deoxy-D-xylulose 5-phosphate: step 3/6. Functionally, catalyzes the phosphorylation of the position 2 hydroxy group of 4-diphosphocytidyl-2C-methyl-D-erythritol. In Chlamydia trachomatis serovar L2b (strain UCH-1/proctitis), this protein is 4-diphosphocytidyl-2-C-methyl-D-erythritol kinase.